A 410-amino-acid polypeptide reads, in one-letter code: Monoglucosyldiacylglycerol epimerase (410 aa).

Positions 1–14 (MAMAWLMGLGLALA) are cleaved as a signal peptide. 2 helical membrane-spanning segments follow: residues 71–91 (ALVM…WQGF) and 96–116 (LILA…SAIA). The active-site Proton acceptor is the Y320. Residues 380 to 400 (IIVTINPITFIAFPVKEFFVS) form a helical membrane-spanning segment.

This sequence belongs to the short-chain dehydrogenases/reductases (SDR) family.

The protein localises to the membrane. The enzyme catalyses a 1,2-diacyl-3-O-(beta-D-glucopyranosyl)-sn-glycerol = a 1,2-diacyl-3-O-(beta-D-galactosyl)-sn-glycerol. Involved in the biosynthesis of galactolipids found in the photosynthetic membranes. Catalyzes the isomerization of monoglucosyldiacylglycerol (GlcDG) to yield monogalactosyldiacylglycerol (MGDG). The polypeptide is Monoglucosyldiacylglycerol epimerase (Synechocystis sp. (strain ATCC 27184 / PCC 6803 / Kazusa)).